The primary structure comprises 272 residues: Glucosyl-3-phosphoglycerate/mannosyl-3-phosphoglycerate phosphatase (272 aa).

Aspartate 8 (nucleophile) is an active-site residue. Mg(2+)-binding residues include aspartate 8, aspartate 10, and aspartate 214.

This sequence belongs to the HAD-like hydrolase superfamily. MPGP family. As to quaternary structure, monomer. It depends on Co(2+) as a cofactor. Requires Mg(2+) as cofactor. The cofactor is Ni(2+).

It catalyses the reaction (2R)-2-O-(alpha-D-glucopyranosyl)-3-phospho-glycerate + H2O = (2R)-2-O-(alpha-D-glucopyranosyl)-glycerate + phosphate. The enzyme catalyses 2-O-(alpha-D-mannosyl)-3-phosphoglycerate + H2O = (2R)-2-O-(alpha-D-mannosyl)-glycerate + phosphate. Its function is as follows. Involved in the biosynthesis of glucosylglycerate. Catalyzes the dephosphorylation of glucosyl-3-phosphoglycerate (GPG) and mannosyl-3-phosphoglycerate (MPG) to glucosylglycerate (GG) and mannosylglycerate (MG), respectively. This chain is Glucosyl-3-phosphoglycerate/mannosyl-3-phosphoglycerate phosphatase, found in Methanococcoides burtonii (strain DSM 6242 / NBRC 107633 / OCM 468 / ACE-M).